The chain runs to 284 residues: D-tagatose-1,6-bisphosphate aldolase subunit GatY (284 aa).

The active-site Proton donor is the D82. H83 and H180 together coordinate Zn(2+). Position 181 (C181) interacts with dihydroxyacetone phosphate. Residue H208 coordinates Zn(2+). Residues 209 to 211 and 230 to 233 contribute to the dihydroxyacetone phosphate site; these read GAS and NVAT.

Belongs to the class II fructose-bisphosphate aldolase family. TagBP aldolase GatY subfamily. Forms a complex with GatZ. Zn(2+) serves as cofactor.

The enzyme catalyses D-tagatofuranose 1,6-bisphosphate = D-glyceraldehyde 3-phosphate + dihydroxyacetone phosphate. Its pathway is carbohydrate metabolism; D-tagatose 6-phosphate degradation; D-glyceraldehyde 3-phosphate and glycerone phosphate from D-tagatose 6-phosphate: step 2/2. In terms of biological role, catalytic subunit of the tagatose-1,6-bisphosphate aldolase GatYZ, which catalyzes the reversible aldol condensation of dihydroxyacetone phosphate (DHAP or glycerone-phosphate) with glyceraldehyde 3-phosphate (G3P) to produce tagatose 1,6-bisphosphate (TBP). Requires GatZ subunit for full activity and stability. Is involved in the catabolism of galactitol. This chain is D-tagatose-1,6-bisphosphate aldolase subunit GatY, found in Salmonella paratyphi A (strain ATCC 9150 / SARB42).